The sequence spans 1323 residues: Lysine-specific demethylase 3A (1323 aa).

Disordered stretches follow at residues 255 to 287 (TRTG…PSMC), 307 to 337 (ATPS…PQGC), and 385 to 416 (SEPK…GLPK). The residue at position 264 (serine 264) is a Phosphoserine. 2 stretches are compositionally biased toward polar residues: residues 266 to 283 (ENNG…SEAS) and 307 to 327 (ATPS…NSPP). Phosphoserine is present on serine 325. A Phosphoserine modification is found at serine 446. 2 disordered regions span residues 468 to 487 (AEKK…LKET) and 495 to 517 (SCCT…LTDP). 2 stretches are compositionally biased toward polar residues: residues 477 to 486 (LGSQSQNLKE) and 495 to 507 (SCCT…TQTP). A C6-type zinc finger spans residues 662–687 (CDVCDTTIFNLHWVCPRCGFGVCVDC). The LXXLL motif motif lies at 885-889 (LRNLL). N6-acetyllysine is present on lysine 895. Residues 1060 to 1283 (MPSRFDDLMA…HCFWLTQEFR (224 aa)) enclose the JmjC domain. Fe cation-binding residues include histidine 1122, aspartate 1124, and histidine 1251.

This sequence belongs to the JHDM2 histone demethylase family. As to quaternary structure, interacts with VRK1. Requires Fe(2+) as cofactor. In terms of tissue distribution, highly expressed in testis (at protein level). Also expressed at high levels in tissues responsive to sympathetic nerve activity such as brown adipose tissue and skeletal muscle.

It is found in the cytoplasm. Its subcellular location is the nucleus. It carries out the reaction N(6),N(6)-dimethyl-L-lysyl(9)-[histone H3] + 2 2-oxoglutarate + 2 O2 = L-lysyl(9)-[histone H3] + 2 formaldehyde + 2 succinate + 2 CO2. Its function is as follows. Histone demethylase that specifically demethylates 'Lys-9' of histone H3, thereby playing a central role in histone code. Preferentially demethylates mono- and dimethylated H3 'Lys-9' residue, with a preference for dimethylated residue, while it has weak or no activity on trimethylated H3 'Lys-9'. Demethylation of Lys residue generates formaldehyde and succinate. Involved in hormone-dependent transcriptional activation, by participating in recruitment to androgen-receptor target genes, resulting in H3 'Lys-9' demethylation and transcriptional activation. Involved in spermatogenesis by regulating expression of target genes such as PRM1 and TNP1 which are required for packaging and condensation of sperm chromatin. Involved in obesity resistance through regulation of metabolic genes such as PPARA and UCP1. This Mus musculus (Mouse) protein is Lysine-specific demethylase 3A (Kdm3a).